The following is a 256-amino-acid chain: Phosphatidylglycerol--prolipoprotein diacylglyceryl transferase (256 aa).

3 helical membrane-spanning segments follow: residues 19-39 (VHWYGLMYLIGFVGAWLLGYW), 56-76 (LIFYSALGVILGGRVGYMLFY), and 91-111 (IWEGGMSFHGGLLGVVIAAWL). Residue R139 participates in a 1,2-diacyl-sn-glycero-3-phospho-(1'-sn-glycerol) binding. The chain crosses the membrane as a helical span at residues 231-251 (FGWLTMGQVLSIPMLLIGIWL).

The protein belongs to the Lgt family.

The protein resides in the cell inner membrane. The enzyme catalyses L-cysteinyl-[prolipoprotein] + a 1,2-diacyl-sn-glycero-3-phospho-(1'-sn-glycerol) = an S-1,2-diacyl-sn-glyceryl-L-cysteinyl-[prolipoprotein] + sn-glycerol 1-phosphate + H(+). It functions in the pathway protein modification; lipoprotein biosynthesis (diacylglyceryl transfer). Catalyzes the transfer of the diacylglyceryl group from phosphatidylglycerol to the sulfhydryl group of the N-terminal cysteine of a prolipoprotein, the first step in the formation of mature lipoproteins. This is Phosphatidylglycerol--prolipoprotein diacylglyceryl transferase from Legionella pneumophila subsp. pneumophila (strain Philadelphia 1 / ATCC 33152 / DSM 7513).